Consider the following 4306-residue polypeptide: Cytoplasmic dynein 2 heavy chain 1 (4306 aa).

The segment at M1–Q1650 is stem. L145–S152 is an ATP binding site. Positions K669–H696 form a coiled coil. AAA regions lie at residues Y1651–G1875, S1941–D2161, L2249–G2505, and H2617–K2862. Residues G1689–T1696, G1979–S1986, G2291–G2298, and G2655–R2662 each bind ATP. The segment at A2880–I3168 is stalk. 3 coiled-coil regions span residues L2896–Q2981, L3108–L3199, and I3407–E3441. 2 AAA regions span residues L3243 to D3472 and M3689 to R3904.

It belongs to the dynein heavy chain family. As to quaternary structure, the cytoplasmic dynein complex 2 is probably composed by a heavy chain DYNC2H1 homodimer and a number of DYNC2LI1 light intermediate chains. As to expression, widely expressed both in ciliated and unciliated tissues. Detected in brain and testis (at protein level).

The protein resides in the cytoplasm. It localises to the cytoskeleton. Its subcellular location is the cilium axoneme. The protein localises to the cell membrane. Functionally, may function as a motor for intraflagellar retrograde transport. Functions in cilia biogenesis. May play a role in transport between endoplasmic reticulum and Golgi or organization of the Golgi in cells. This chain is Cytoplasmic dynein 2 heavy chain 1 (Dync2h1), found in Rattus norvegicus (Rat).